The sequence spans 621 residues: Type 2 DNA topoisomerase 6 subunit B (621 aa).

Residues Asn-48, Asp-80, 101–102, 111–118, and Lys-435 each bind ATP; these read SR and GQQGIGIS.

The protein belongs to the TOP6B family. As to quaternary structure, homodimer. Heterotetramer of two Top6A and two Top6B chains.

The enzyme catalyses ATP-dependent breakage, passage and rejoining of double-stranded DNA.. Functionally, relaxes both positive and negative superturns and exhibits a strong decatenase activity. This Methanosarcina mazei (strain ATCC BAA-159 / DSM 3647 / Goe1 / Go1 / JCM 11833 / OCM 88) (Methanosarcina frisia) protein is Type 2 DNA topoisomerase 6 subunit B.